The sequence spans 156 residues: Ribosome maturation factor RimP (156 aa).

Belongs to the RimP family.

It localises to the cytoplasm. In terms of biological role, required for maturation of 30S ribosomal subunits. The chain is Ribosome maturation factor RimP from Shouchella clausii (strain KSM-K16) (Alkalihalobacillus clausii).